A 123-amino-acid polypeptide reads, in one-letter code: Large ribosomal subunit protein bL21 (123 aa).

The protein belongs to the bacterial ribosomal protein bL21 family. As to quaternary structure, part of the 50S ribosomal subunit. Contacts protein L20.

Functionally, this protein binds to 23S rRNA in the presence of protein L20. The sequence is that of Large ribosomal subunit protein bL21 from Sinorhizobium fredii (strain NBRC 101917 / NGR234).